A 251-amino-acid polypeptide reads, in one-letter code: Ribosome maturation factor RimP (251 aa).

Positions 198-251 are disordered; the sequence is NLGLEPPAAPHAKISEKTTKNTKPKKKPAPTNTKKHRLAAERARRGEIEPDEGD. Positions 217-234 are enriched in basic residues; that stretch reads KNTKPKKKPAPTNTKKHR. The span at 235 to 245 shows a compositional bias: basic and acidic residues; sequence LAAERARRGEI.

It belongs to the RimP family.

It is found in the cytoplasm. Required for maturation of 30S ribosomal subunits. In Bradyrhizobium diazoefficiens (strain JCM 10833 / BCRC 13528 / IAM 13628 / NBRC 14792 / USDA 110), this protein is Ribosome maturation factor RimP.